The chain runs to 329 residues: NADH-quinone oxidoreductase subunit H (329 aa).

9 consecutive transmembrane segments (helical) span residues 9-29, 42-62, 75-95, 117-137, 154-174, 188-208, 238-258, 269-291, and 309-329; these read LIKI…ATYI, GPCY…IKLF, FIFT…MAPI, IGFL…ILAG, IQLL…LMVV, GGFL…FLIA, LKWG…SFVI, WGFI…LSMW, and WKIM…VILI.

This sequence belongs to the complex I subunit 1 family. NDH-1 is composed of 14 different subunits. Subunits NuoA, H, J, K, L, M, N constitute the membrane sector of the complex.

The protein resides in the cell inner membrane. It catalyses the reaction a quinone + NADH + 5 H(+)(in) = a quinol + NAD(+) + 4 H(+)(out). In terms of biological role, NDH-1 shuttles electrons from NADH, via FMN and iron-sulfur (Fe-S) centers, to quinones in the respiratory chain. The immediate electron acceptor for the enzyme in this species is believed to be ubiquinone. Couples the redox reaction to proton translocation (for every two electrons transferred, four hydrogen ions are translocated across the cytoplasmic membrane), and thus conserves the redox energy in a proton gradient. This subunit may bind ubiquinone. The protein is NADH-quinone oxidoreductase subunit H of Helicobacter pylori (strain J99 / ATCC 700824) (Campylobacter pylori J99).